We begin with the raw amino-acid sequence, 678 residues long: NADPH--cytochrome P450 reductase (678 aa).

Gly2 carries the post-translational modification N-acetylglycine. Residues 2–22 are Lumenal-facing; it reads GDSHEDTSATMPEAVAEEVSL. Residues 23 to 43 form a helical membrane-spanning segment; it reads FSTTDMVLFSLIVGVLTYWFI. At 44 to 678 the chain is on the cytoplasmic side; it reads FRKKKEEIPE…KGRYSLDVWS (635 aa). The 145-residue stretch at 80-224 folds into the Flavodoxin-like domain; the sequence is IIVFYGSQTG…DFITWREQFW (145 aa). Residues 86 to 91, 138 to 141, 173 to 182, and Asp208 contribute to the FMN site; these read SQTGTA, ATYG, and LGNKTYEHFN. The 243-residue stretch at 279-521 folds into the FAD-binding FR-type domain; that stretch reads KNPFLAAVTA…FVRKSQFRLP (243 aa). Arg298 is a binding site for NADP(+). Residues Arg424, 454-457, 472-474, Tyr478, and 488-491 contribute to the FAD site; these read RYYS, CAV, and GVAT. NADP(+) contacts are provided by residues Thr535, 596-597, 602-606, and Asp639; these read SR and KVYVQ. An FAD-binding site is contributed by Trp677.

The protein belongs to the NADPH--cytochrome P450 reductase family. In the N-terminal section; belongs to the flavodoxin family. It in the C-terminal section; belongs to the flavoprotein pyridine nucleotide cytochrome reductase family. FAD is required as a cofactor. FMN serves as cofactor.

It is found in the endoplasmic reticulum membrane. It carries out the reaction 2 oxidized [cytochrome P450] + NADPH = 2 reduced [cytochrome P450] + NADP(+) + H(+). In terms of biological role, this enzyme is required for electron transfer from NADP to cytochrome P450 in microsomes. It can also provide electron transfer to heme oxygenase and cytochrome B5. The sequence is that of NADPH--cytochrome P450 reductase from Rattus norvegicus (Rat).